Consider the following 413-residue polypeptide: PCI domain-containing protein 2 homolog (413 aa).

Positions 222-403 (VAYNYFLGRK…QKLVISKTNA (182 aa)) constitute a PCI domain.

Belongs to the CSN12 family.

This chain is PCI domain-containing protein 2 homolog, found in Caenorhabditis briggsae.